Here is a 395-residue protein sequence, read N- to C-terminus: Elongation factor Tu (395 aa).

The tr-type G domain maps to 10–204; it reads KEHANIGTIG…AVDDYIPTPE (195 aa). The interval 19 to 26 is G1; sequence GHVDHGKT. 19-26 is a GTP binding site; it reads GHVDHGKT. Residue Thr26 coordinates Mg(2+). A G2 region spans residues 60 to 64; sequence GITIN. Residues 81-84 are G3; sequence DCPG. Residues 81-85 and 136-139 contribute to the GTP site; these read DCPGH and NKAD. Positions 136–139 are G4; that stretch reads NKAD. Positions 174–176 are G5; sequence SAL.

The protein belongs to the TRAFAC class translation factor GTPase superfamily. Classic translation factor GTPase family. EF-Tu/EF-1A subfamily. Monomer.

It is found in the cytoplasm. The enzyme catalyses GTP + H2O = GDP + phosphate + H(+). In terms of biological role, GTP hydrolase that promotes the GTP-dependent binding of aminoacyl-tRNA to the A-site of ribosomes during protein biosynthesis. In Staphylococcus carnosus (strain TM300), this protein is Elongation factor Tu.